The following is a 338-amino-acid chain: 1-aminocyclopropane-1-carboxylate deaminase (338 aa).

Position 51 is an N6-(pyridoxal phosphate)lysine (Lys-51). Catalysis depends on Ser-78, which acts as the Nucleophile.

Belongs to the ACC deaminase/D-cysteine desulfhydrase family. As to quaternary structure, homotrimer. Requires pyridoxal 5'-phosphate as cofactor.

It catalyses the reaction 1-aminocyclopropane-1-carboxylate + H2O = 2-oxobutanoate + NH4(+). Functionally, catalyzes a cyclopropane ring-opening reaction, the irreversible conversion of 1-aminocyclopropane-1-carboxylate (ACC) to ammonia and alpha-ketobutyrate. Allows growth on ACC as a nitrogen source. The protein is 1-aminocyclopropane-1-carboxylate deaminase of Burkholderia vietnamiensis (strain G4 / LMG 22486) (Burkholderia cepacia (strain R1808)).